Consider the following 346-residue polypeptide: MQTLNTLDLQTTSLKIVDGKLWILDQQTLPQRQEWLSADTVELLIEHIQALRVRGAPLIGLSASLLLALLAERGLPQAQLEQALIALRESRPTAVNLMNNLARMQQALLHANWVAAMTHEALRLVEEDRELCERIAQHGVQLVKPDSNLLTHCNTGGLATAGIGTAIGVLLRAHQQGKIKQVWVDETRPLLQGGRLTAWELGELGIPYQLICDSMAASLMAQGRVDAVWVGADRIAANGDVANKIGTYSLAVLANYHRIPFYVAAPHTTHDPDCPNGAAIPIEQRDASEVKGVSGGFGHCQWAPANAPVYNPAFDVTPAALISGWVLDSGVITPGQVAAGFFQPKN.

Substrate contacts are provided by residues R54 to A56, R91, and Q192. D233 (proton donor) is an active-site residue. N243 to K244 serves as a coordination point for substrate.

This sequence belongs to the eIF-2B alpha/beta/delta subunits family. MtnA subfamily.

It carries out the reaction 5-(methylsulfanyl)-alpha-D-ribose 1-phosphate = 5-(methylsulfanyl)-D-ribulose 1-phosphate. It participates in amino-acid biosynthesis; L-methionine biosynthesis via salvage pathway; L-methionine from S-methyl-5-thio-alpha-D-ribose 1-phosphate: step 1/6. Functionally, catalyzes the interconversion of methylthioribose-1-phosphate (MTR-1-P) into methylthioribulose-1-phosphate (MTRu-1-P). This chain is Methylthioribose-1-phosphate isomerase, found in Yersinia enterocolitica serotype O:8 / biotype 1B (strain NCTC 13174 / 8081).